The chain runs to 400 residues: Dual-specificity RNA methyltransferase RlmN (400 aa).

Glu125 (proton acceptor) is an active-site residue. Positions Glu131–Leu372 constitute a Radical SAM core domain. Cys138 and Cys375 are oxidised to a cystine. [4Fe-4S] cluster-binding residues include Cys145, Cys149, and Cys152. S-adenosyl-L-methionine is bound by residues Gly201–Glu202, Ser233, Ser255–His257, and Asn332. Cys375 acts as the S-methylcysteine intermediate in catalysis.

The protein belongs to the radical SAM superfamily. RlmN family. It depends on [4Fe-4S] cluster as a cofactor.

It localises to the cytoplasm. The catalysed reaction is adenosine(2503) in 23S rRNA + 2 reduced [2Fe-2S]-[ferredoxin] + 2 S-adenosyl-L-methionine = 2-methyladenosine(2503) in 23S rRNA + 5'-deoxyadenosine + L-methionine + 2 oxidized [2Fe-2S]-[ferredoxin] + S-adenosyl-L-homocysteine. It catalyses the reaction adenosine(37) in tRNA + 2 reduced [2Fe-2S]-[ferredoxin] + 2 S-adenosyl-L-methionine = 2-methyladenosine(37) in tRNA + 5'-deoxyadenosine + L-methionine + 2 oxidized [2Fe-2S]-[ferredoxin] + S-adenosyl-L-homocysteine. In terms of biological role, specifically methylates position 2 of adenine 2503 in 23S rRNA and position 2 of adenine 37 in tRNAs. m2A2503 modification seems to play a crucial role in the proofreading step occurring at the peptidyl transferase center and thus would serve to optimize ribosomal fidelity. The sequence is that of Dual-specificity RNA methyltransferase RlmN from Bradyrhizobium diazoefficiens (strain JCM 10833 / BCRC 13528 / IAM 13628 / NBRC 14792 / USDA 110).